A 3073-amino-acid chain; its full sequence is Adhesion G-protein coupled receptor G4 (3073 aa).

The N-terminal stretch at 1–25 (MRKHILHQRLCGLILVSSFIFLTDS) is a signal peptide. Residues 26 to 2691 (LSLKGKRLDF…RSTVDAVNER (2666 aa)) are Extracellular-facing. One can recognise a Pentraxin (PTX) domain in the interval 29-228 (KGKRLDFYGE…SPTVDRRLRC (200 aa)). Intrachain disulfides connect Cys58–Cys123 and Cys200–Cys228. An N-linked (GlcNAc...) asparagine glycan is attached at Asn233. The tract at residues 253–272 (SQTTGLNPHKTSHSSTLLPE) is disordered. An N-linked (GlcNAc...) asparagine glycan is attached at Asn662. Composition is skewed to polar residues over residues 671–696 (GNAT…ESKV) and 929–951 (GNSA…SSST). Disordered regions lie at residues 671 to 697 (GNAT…SKVT) and 924 to 951 (SEKS…SSST). 3 N-linked (GlcNAc...) asparagine glycosylation sites follow: Asn1141, Asn1304, and Asn1495. Disordered regions lie at residues 1565 to 1595 (FTSS…AGPT), 1741 to 1760 (TLTN…STPT), and 1945 to 1972 (ITLS…SDSR). Residues 1945 to 1954 (ITLSSNPSVN) show a composition bias toward polar residues. A compositionally biased stretch (low complexity) spans 1955 to 1972 (SRATSPTWSSSSLPSDSR). The GAIN-B domain occupies 2535 to 2684 (SSEEVIAPQI…GVLMDLSRST (150 aa)). Disulfide bonds link Cys2635–Cys2666 and Cys2654–Cys2668. The segment at 2635–2684 (CAFWDFDTNNGLGGWNPSGCKLKESNINYTICQCNHLTHFGVLMDLSRST) is GPS. The segment at 2673-2684 (HFGVLMDLSRST) is stachel. Residues 2692–2712 (ILVIITYTGCGISSIFLGIAM) traverse the membrane as a helical segment. Topologically, residues 2713 to 2728 (VTYIAFHKLRKDYPSK) are cytoplasmic. The helical transmembrane segment at 2729 to 2749 (ILINLCTALLMLNLAFLVNSW) threads the bilayer. The Extracellular segment spans residues 2750–2755 (LTSFQK). A helical transmembrane segment spans residues 2756–2776 (VGLCITAAVALHYFLLVSLTW). A disulfide bond links Cys2759 and Cys2836. The Cytoplasmic segment spans residues 2777 to 2798 (MGLEAVHMYFALVKVFNTYIPN). A helical membrane pass occupies residues 2799–2819 (YILKFCLAGWGIPAITVAIIL). The Extracellular portion of the chain corresponds to 2820 to 2842 (SVRKDLYGTLSPTTPFCWIKDDH). Residues 2843–2863 (IFYISVVAYFCLIFLMNLSMF) traverse the membrane as a helical segment. Residues 2864 to 2892 (CTVLVQLTSVKSQSQKTRKKMILNDLKGT) are Cytoplasmic-facing. The helical transmembrane segment at 2893–2913 (ISLTFLLGLTWGFAFFAWGPV) threads the bilayer. A topological domain (extracellular) is located at residue Arg2914. A helical transmembrane segment spans residues 2915–2935 (IFFLYLFAICNTLQGFLIFVF). At 2936-3073 (YCVMKESVRE…SSGLGEMFNL (138 aa)) the chain is on the cytoplasmic side.

Belongs to the G-protein coupled receptor 2 family. Adhesion G-protein coupled receptor (ADGR) subfamily. Homodimer; homodimerizes via its Pentraxin domain in a calcium-independent manner. Heterodimer of 2 chains generated by proteolytic processing; the large extracellular N-terminal fragment and the membrane-bound C-terminal fragment predominantly remain associated and non-covalently linked. Autoproteolytically processed at the GPS region of the GAIN-B domain; this cleavage modulates receptor activity.

The protein resides in the membrane. Its activity is regulated as follows. Forms a heterodimer of 2 chains generated by proteolytic processing that remain associated through non-covalent interactions mediated by the GAIN-B domain. In the inactivated receptor, the Stachel sequence (also named stalk) is embedded in the GAIN-B domain, where it adopts a beta-strand conformation. On activation, the Stachel moves into the 7 transmembrane region and adopts a twisted hook-shaped configuration that forms contacts within the receptor, leading to coupling of a G-alpha protein, which activates signaling. The cleaved GAIN-B and N-terminal domains can then dissociate from the rest of the receptor. Orphan adhesion G-protein coupled receptor (aGPCR). Ligand binding causes a conformation change that triggers signaling via guanine nucleotide-binding proteins (G proteins) and modulates the activity of downstream effectors, such as adenylate cyclase. ADGRG4 is coupled to G(s) G proteins and mediates activation of adenylate cyclase activity. May be act as sensor of mechanical forces. The sequence is that of Adhesion G-protein coupled receptor G4 from Mus musculus (Mouse).